A 55-amino-acid polypeptide reads, in one-letter code: ATP synthase F(0) complex subunit 8 (55 aa).

A helical membrane pass occupies residues 4 to 24; that stretch reads LNPSPWFIILLFSWVIFMVIL.

It belongs to the ATPase protein 8 family. In terms of assembly, component of the ATP synthase complex composed at least of ATP5F1A/subunit alpha, ATP5F1B/subunit beta, ATP5MC1/subunit c (homooctomer), MT-ATP6/subunit a, MT-ATP8/subunit 8, ATP5ME/subunit e, ATP5MF/subunit f, ATP5MG/subunit g, ATP5MK/subunit k, ATP5MJ/subunit j, ATP5F1C/subunit gamma, ATP5F1D/subunit delta, ATP5F1E/subunit epsilon, ATP5PF/subunit F6, ATP5PB/subunit b, ATP5PD/subunit d, ATP5PO/subunit OSCP. ATP synthase complex consists of a soluble F(1) head domain (subunits alpha(3) and beta(3)) - the catalytic core - and a membrane F(0) domain - the membrane proton channel (subunits c, a, 8, e, f, g, k and j). These two domains are linked by a central stalk (subunits gamma, delta, and epsilon) rotating inside the F1 region and a stationary peripheral stalk (subunits F6, b, d, and OSCP).

Its subcellular location is the mitochondrion membrane. In terms of biological role, subunit 8, of the mitochondrial membrane ATP synthase complex (F(1)F(0) ATP synthase or Complex V) that produces ATP from ADP in the presence of a proton gradient across the membrane which is generated by electron transport complexes of the respiratory chain. ATP synthase complex consist of a soluble F(1) head domain - the catalytic core - and a membrane F(1) domain - the membrane proton channel. These two domains are linked by a central stalk rotating inside the F(1) region and a stationary peripheral stalk. During catalysis, ATP synthesis in the catalytic domain of F(1) is coupled via a rotary mechanism of the central stalk subunits to proton translocation. In vivo, can only synthesize ATP although its ATP hydrolase activity can be activated artificially in vitro. Part of the complex F(0) domain. The chain is ATP synthase F(0) complex subunit 8 from Scyliorhinus canicula (Small-spotted catshark).